Consider the following 176-residue polypeptide: Lipoprotein signal peptidase (176 aa).

3 helical membrane-spanning segments follow: residues 12 to 32, 67 to 87, and 94 to 114; these read WYWV…WVLT, WQKW…TIWL, and VWRL…NLID. Catalysis depends on residues Asp123 and Asp141. Residues 133 to 153 form a helical membrane-spanning segment; it reads HFAAFNIADSAICIGAGLIIL.

This sequence belongs to the peptidase A8 family.

It localises to the cell inner membrane. The catalysed reaction is Release of signal peptides from bacterial membrane prolipoproteins. Hydrolyzes -Xaa-Yaa-Zaa-|-(S,diacylglyceryl)Cys-, in which Xaa is hydrophobic (preferably Leu), and Yaa (Ala or Ser) and Zaa (Gly or Ala) have small, neutral side chains.. It functions in the pathway protein modification; lipoprotein biosynthesis (signal peptide cleavage). Functionally, this protein specifically catalyzes the removal of signal peptides from prolipoproteins. The protein is Lipoprotein signal peptidase of Shewanella sediminis (strain HAW-EB3).